We begin with the raw amino-acid sequence, 82 residues long: Defensin-like protein 7 (82 aa).

A signal peptide spans methionine 1 to glycine 29. Glutamine 30 carries the pyrrolidone carboxylic acid modification. Intrachain disulfides connect cysteine 33-cysteine 77, cysteine 44-cysteine 64, cysteine 50-cysteine 71, and cysteine 54-cysteine 73.

It belongs to the DEFL family. As to expression, expressed in stems, roots, rosette leaves and flower buds.

It is found in the secreted. The chain is Defensin-like protein 7 (LCR75) from Arabidopsis thaliana (Mouse-ear cress).